Reading from the N-terminus, the 154-residue chain is Large ribosomal subunit protein uL30 (154 aa).

This sequence belongs to the universal ribosomal protein uL30 family. Part of the 50S ribosomal subunit.

The sequence is that of Large ribosomal subunit protein uL30 from Methanococcus maripaludis (strain DSM 14266 / JCM 13030 / NBRC 101832 / S2 / LL).